A 245-amino-acid polypeptide reads, in one-letter code: Phosphoribosylaminoimidazole-succinocarboxamide synthase (245 aa).

This sequence belongs to the SAICAR synthetase family.

It catalyses the reaction 5-amino-1-(5-phospho-D-ribosyl)imidazole-4-carboxylate + L-aspartate + ATP = (2S)-2-[5-amino-1-(5-phospho-beta-D-ribosyl)imidazole-4-carboxamido]succinate + ADP + phosphate + 2 H(+). The protein operates within purine metabolism; IMP biosynthesis via de novo pathway; 5-amino-1-(5-phospho-D-ribosyl)imidazole-4-carboxamide from 5-amino-1-(5-phospho-D-ribosyl)imidazole-4-carboxylate: step 1/2. The polypeptide is Phosphoribosylaminoimidazole-succinocarboxamide synthase (Trichormus variabilis (strain ATCC 29413 / PCC 7937) (Anabaena variabilis)).